We begin with the raw amino-acid sequence, 296 residues long: Porphobilinogen deaminase (296 aa).

Cys235 carries the S-(dipyrrolylmethanemethyl)cysteine modification.

The protein belongs to the HMBS family. In terms of assembly, monomer. It depends on dipyrromethane as a cofactor.

The enzyme catalyses 4 porphobilinogen + H2O = hydroxymethylbilane + 4 NH4(+). It functions in the pathway porphyrin-containing compound metabolism; protoporphyrin-IX biosynthesis; coproporphyrinogen-III from 5-aminolevulinate: step 2/4. Tetrapolymerization of the monopyrrole PBG into the hydroxymethylbilane pre-uroporphyrinogen in several discrete steps. The chain is Porphobilinogen deaminase from Alkaliphilus oremlandii (strain OhILAs) (Clostridium oremlandii (strain OhILAs)).